Consider the following 191-residue polypeptide: Molybdenum cofactor guanylyltransferase (191 aa).

Residues 13-15 (LAG), Lys26, Asp72, and Asp102 contribute to the GTP site. Asp102 provides a ligand contact to Mg(2+).

The protein belongs to the MobA family. Monomer. Mg(2+) serves as cofactor.

It localises to the cytoplasm. It catalyses the reaction Mo-molybdopterin + GTP + H(+) = Mo-molybdopterin guanine dinucleotide + diphosphate. In terms of biological role, transfers a GMP moiety from GTP to Mo-molybdopterin (Mo-MPT) cofactor (Moco or molybdenum cofactor) to form Mo-molybdopterin guanine dinucleotide (Mo-MGD) cofactor. The protein is Molybdenum cofactor guanylyltransferase of Pseudomonas putida (strain ATCC 700007 / DSM 6899 / JCM 31910 / BCRC 17059 / LMG 24140 / F1).